Consider the following 360-residue polypeptide: Protein Wnt-2 (360 aa).

The first 26 residues, 1-26, serve as a signal peptide directing secretion; the sequence is MNSSSLFGIWLSVPLILSWVTPQVSS. Intrachain disulfides connect Cys76–Cys87, Cys127–Cys135, Cys137–Cys157, Cys206–Cys220, Cys208–Cys215, Cys278–Cys309, Cys294–Cys304, Cys308–Cys348, Cys324–Cys339, Cys326–Cys336, and Cys331–Cys332. Ser212 is lipidated: O-palmitoleoyl serine; by PORCN. Residue Asn295 is glycosylated (N-linked (GlcNAc...) asparagine).

This sequence belongs to the Wnt family. Palmitoleoylation is required for efficient binding to frizzled receptors. Depalmitoleoylation leads to Wnt signaling pathway inhibition.

It localises to the secreted. It is found in the extracellular space. Its subcellular location is the extracellular matrix. Ligand for members of the frizzled family of seven transmembrane receptors. Functions in the canonical Wnt signaling pathway that results in activation of transcription factors of the TCF/LEF family. Functions as a upstream regulator of FGF10 expression. Plays an important role in embryonic lung development. May contribute to embryonic brain development by regulating the proliferation of dopaminergic precursors and neurons. The sequence is that of Protein Wnt-2 (WNT2) from Monodelphis domestica (Gray short-tailed opossum).